Consider the following 609-residue polypeptide: Replication factor A protein 1 (609 aa).

Over residues 130–152 (QNEQNNASAPRTGISTSTNSFYG) the composition is skewed to polar residues. The segment at 130 to 166 (QNEQNNASAPRTGISTSTNSFYGNNAAATAPAPPPMM) is disordered. A DNA-binding region (OB) is located at residues 192–278 (WTIRARVTNK…NEYELMFERD (87 aa)). The C4-type zinc-finger motif lies at 477–498 (CPAADCNKKVFDQGGSWRCEKC).

The protein belongs to the replication factor A protein 1 family. As to quaternary structure, component of the heterotrimeric canonical replication protein A complex (RPA).

The protein localises to the nucleus. As part of the replication protein A (RPA/RP-A), a single-stranded DNA-binding heterotrimeric complex, may play an essential role in DNA replication, recombination and repair. Binds and stabilizes single-stranded DNA intermediates, preventing complementary DNA reannealing and recruiting different proteins involved in DNA metabolism. This Schizosaccharomyces pombe (strain 972 / ATCC 24843) (Fission yeast) protein is Replication factor A protein 1 (ssb1).